The chain runs to 327 residues: AA9 family lytic polysaccharide monooxygenase B (327 aa).

A signal peptide spans 1-19; it reads MKSFTATALAALLAQQAAA. Cu(2+) is bound by residues histidine 20 and histidine 98. Cysteine 68 and cysteine 192 are joined by a disulfide. Residues histidine 178 and glutamine 187 each contribute to the O2 site. Position 189 (tyrosine 189) interacts with Cu(2+). Residues 264-280 are compositionally biased toward low complexity; the sequence is SPTTSLTPPVSTSTPAP. The tract at residues 264–284 is disordered; that stretch reads SPTTSLTPPVSTSTPAPGNGG. The region spanning 291-327 is the CBM1 domain; sequence CTVQKYGQCGGQGYTGCTTCAAGSTCNTTNQWYHQCV. N-linked (GlcNAc...) asparagine glycosylation occurs at asparagine 317.

This sequence belongs to the polysaccharide monooxygenase AA9 family. Requires Cu(2+) as cofactor.

The protein localises to the secreted. The enzyme catalyses [(1-&gt;4)-beta-D-glucosyl]n+m + reduced acceptor + O2 = 4-dehydro-beta-D-glucosyl-[(1-&gt;4)-beta-D-glucosyl]n-1 + [(1-&gt;4)-beta-D-glucosyl]m + acceptor + H2O.. Lytic polysaccharide monooxygenase (LPMO) that depolymerizes crystalline and amorphous polysaccharides via the oxidation of scissile alpha- or beta-(1-4)-glycosidic bonds, yielding C1 or C4 oxidation products. Catalysis by LPMOs requires the reduction of the active-site copper from Cu(II) to Cu(I) by a reducing agent and H(2)O(2) or O(2) as a cosubstrate. This Podospora anserina (strain S / ATCC MYA-4624 / DSM 980 / FGSC 10383) (Pleurage anserina) protein is AA9 family lytic polysaccharide monooxygenase B (LPMO9B).